Reading from the N-terminus, the 379-residue chain is Nematocin receptor 1 (379 aa).

At 19–48 (HNLYLFQMLELQENITDSQPMDPPSLEIMM) the chain is on the extracellular side. An N-linked (GlcNAc...) asparagine glycan is attached at Asn32. Residues 49–69 (LHHLMIILVTLFGNTLLIYVI) traverse the membrane as a helical segment. Residues 70–95 (YKNNAVLRRKRVTPVQMLMLHMCAAD) lie on the Cytoplasmic side of the membrane. Residues 96–116 (ILFALISVGPTMAITATVPFF) form a helical membrane-spanning segment. Topologically, residues 117 to 124 (YGPNLLCK) are extracellular. Cys123 and Cys196 are disulfide-bonded. Residues 125–145 (LTKFLQVIPMYASSFLLVAIS) traverse the membrane as a helical segment. Residues 146–168 (ADRYQAICRPLASMKSSIYNRPA) are Cytoplasmic-facing. The chain crosses the membrane as a helical span at residues 169-189 (LYSGIAWTAAILFSTPQLYLF). Topologically, residues 190 to 207 (EKRNGDCSENYTTALQYQ) are extracellular. Residue Asn199 is glycosylated (N-linked (GlcNAc...) asparagine). A helical transmembrane segment spans residues 208–228 (LYVCLFNSVVWLLPSAIAGWL). The Cytoplasmic segment spans residues 229 to 289 (YLCVCKAVWK…DRRRVQTVKL (61 aa)). A helical transmembrane segment spans residues 290–310 (TLTIVAANFVLWAPFCITSVI). The Extracellular segment spans residues 311–320 (DAVWPTAINS). N-linked (GlcNAc...) asparagine glycosylation is present at Asn319. The helical transmembrane segment at 321–343 (TFATYIMFFGNLNSCMNPWLWFH) threads the bilayer. Topologically, residues 344-379 (FNRKQLKRACPCRKSSEPLIQSLVYVHVMTSEQSDF) are cytoplasmic.

The protein belongs to the G-protein coupled receptor 1 family. Vasopressin/oxytocin receptor subfamily. Detected in the left ASE gustatory neuron, the chemosensory neuron pairs ASH and ADF, and the PQR tail neuron. In males, detected in hook and tail sensory neurons involved in vulval sensing and hermaphrodite contact, and in spicule protractor muscles.

The protein localises to the cell membrane. In terms of biological role, receptor for nematocin. The activity of this receptor is mediated by G proteins which activate a phosphatidylinositol-calcium second messenger system. The activity of this receptor may be modulated by ntr-2, leading to reduced intracellular cAMP production. Plays a role in gustatory associative learning. Also plays a role in male mating behavior. This Caenorhabditis elegans protein is Nematocin receptor 1.